Consider the following 98-residue polypeptide: Integration host factor subunit beta (98 aa).

The protein belongs to the bacterial histone-like protein family. Heterodimer of an alpha and a beta chain.

Functionally, this protein is one of the two subunits of integration host factor, a specific DNA-binding protein that functions in genetic recombination as well as in transcriptional and translational control. The chain is Integration host factor subunit beta from Hahella chejuensis (strain KCTC 2396).